We begin with the raw amino-acid sequence, 312 residues long: MIEFEKPIITKIDENKDYGRFVIEPLERGYGTTLGNSLRRVLLSSLPGAAVTSIKIDGVLHEFDTIPGVREDVMQIILNVKGLAVKSYVEDEKIIELDVEGPAEITAGDILTDSDIEIVNPDHYLFTIAEGHSLKATMTVAKNRGYVPAEGNKKDDAPVGTLAVDSIYTPVKKVNYQVEPARVGSNDGFDKLTIEIMTNGTIIPEDALGLSARVLIEHLNLFTDLTEVAKATEVMKETEKVNDEKVLDRTIEELDLSVRSYNCLKRAGINTVFDLTEKTEPEMMKVRNLGRKSLEEVKIKLADLGLGLKNDK.

The interval 1 to 226 (MIEFEKPIIT…EHLNLFTDLT (226 aa)) is alpha N-terminal domain (alpha-NTD). The alpha C-terminal domain (alpha-CTD) stretch occupies residues 243-312 (DEKVLDRTIE…DLGLGLKNDK (70 aa)).

Belongs to the RNA polymerase alpha chain family. In terms of assembly, homodimer. The RNAP catalytic core consists of 2 alpha, 1 beta, 1 beta' and 1 omega subunit. When a sigma factor is associated with the core the holoenzyme is formed, which can initiate transcription.

It carries out the reaction RNA(n) + a ribonucleoside 5'-triphosphate = RNA(n+1) + diphosphate. Functionally, DNA-dependent RNA polymerase catalyzes the transcription of DNA into RNA using the four ribonucleoside triphosphates as substrates. This Streptococcus agalactiae serotype III (strain NEM316) protein is DNA-directed RNA polymerase subunit alpha.